We begin with the raw amino-acid sequence, 606 residues long: Preterminal protein (606 aa).

The Nuclear localization signal signature appears at 320-329 (RLPVRRRRRR). An O-(5'-phospho-DNA)-serine modification is found at serine 515. Residues 573-606 (HLPLPERQADIPLPPLPAGPEPPLPPGARPRRRF) are disordered. Residues 584–600 (PLPPLPAGPEPPLPPGA) show a composition bias toward pro residues.

Belongs to the adenoviridae terminal protein family. As to quaternary structure, heterodimer with the polymerase; this heterodimer binds to bp 9 to 18 of the genome. Interacts with host POU2F1; POU2F1 binds to the auxiliary sequences in the inverted terminal repeats and tethers the pTP-POL heterodimer to the origin DNA thereby participating in the assembly of the pre-initiation complex (POL-TP-DBP-NFIA-POU2F1). In terms of processing, preterminal protein is used to replicate viral genome, upon genomic encapsidation it is processed first into iTP and finally into TP by adenovirus protease.

It localises to the host nucleus matrix. Its function is as follows. Protein covalently bound to the viral DNA that acts as a primer for viral genomic replication by DNA strand displacement. Assembles on the viral origin of replication in an initiation complex with viral polymerase, DBP, host NFIA and host POU2F1/OCT1. During initiation, the polymerase covalently couples the first dCTP with Ser-580 of pTP. The terminal protein stimulates the template activity over 20 fold compared to protein-free templates. Neo-synthesized viral genomes are linked to two preterminal proteins, one for each 5' end. These new genomes are encapsidated in the nucleus, and during capsid maturation by viral protease, preterminal protein is first cleaved into intermediary (iTP), then into mature TP. May play a role in host nuclear matrix localization of genomic DNA. In Human adenovirus A serotype 12 (HAdV-12), this protein is Preterminal protein.